We begin with the raw amino-acid sequence, 518 residues long: MIPDVSQALAWLEKHPQALKGIQRGLERETLRVNADGTLATTGHPEALGSALTHKWITTDFAEALLEFITPVDGDIEHMLTFMRDLHRYTARNMGDERMWPLSMPCYIAEGQDIELAQYGTSNTGRFKTLYREGLKNRYGALMQTISGVHYNFSLPMAFWQAKCGDISGADAKEKISAGYFRVIRNYYRFGWVIPYLFGASPAICSSFLQGKPTSLPFEKTECGMYYLPYATSLRLSDLGYTNKSQSNLGITFNDLYEYVAGLKQAIKTPSEEYAKIGIEKDGKRLQINSNVLQIENELYAPIRPKRVTRSGESPSDALLRGGIEYIEVRSLDINPFSPIGVDEQQVRFLDLFMVWCALADAPEMSSKELACTRVNWNRVILEGRKPGLTLGIGCETAQFPLPQVGKDLFRDLKRVAQTLDSINGGEAYQKVCDELVACFDNPDLTFSARILRSMIDTGIGGTGKAFAEAYRNLLREEPLEILREEDFVAEREASERRQQEMEAADTEPFAVWLEKHA.

The protein belongs to the glutamate--cysteine ligase type 1 family. Type 1 subfamily.

It catalyses the reaction L-cysteine + L-glutamate + ATP = gamma-L-glutamyl-L-cysteine + ADP + phosphate + H(+). It functions in the pathway sulfur metabolism; glutathione biosynthesis; glutathione from L-cysteine and L-glutamate: step 1/2. The polypeptide is Glutamate--cysteine ligase (Escherichia coli O127:H6 (strain E2348/69 / EPEC)).